A 132-amino-acid chain; its full sequence is Phosphoribosyl-AMP cyclohydrolase (132 aa).

Position 81 (aspartate 81) interacts with Mg(2+). Cysteine 82 serves as a coordination point for Zn(2+). 2 residues coordinate Mg(2+): aspartate 83 and aspartate 85. Zn(2+)-binding residues include cysteine 99 and cysteine 106.

It belongs to the PRA-CH family. In terms of assembly, homodimer. Requires Mg(2+) as cofactor. The cofactor is Zn(2+).

It localises to the cytoplasm. It catalyses the reaction 1-(5-phospho-beta-D-ribosyl)-5'-AMP + H2O = 1-(5-phospho-beta-D-ribosyl)-5-[(5-phospho-beta-D-ribosylamino)methylideneamino]imidazole-4-carboxamide. Its pathway is amino-acid biosynthesis; L-histidine biosynthesis; L-histidine from 5-phospho-alpha-D-ribose 1-diphosphate: step 3/9. Functionally, catalyzes the hydrolysis of the adenine ring of phosphoribosyl-AMP. In Chromobacterium violaceum (strain ATCC 12472 / DSM 30191 / JCM 1249 / CCUG 213 / NBRC 12614 / NCIMB 9131 / NCTC 9757 / MK), this protein is Phosphoribosyl-AMP cyclohydrolase.